The primary structure comprises 371 residues: DNA replication and repair protein RecF (371 aa).

An ATP-binding site is contributed by 30 to 37 (GQNGSGKT).

The protein belongs to the RecF family.

It localises to the cytoplasm. The RecF protein is involved in DNA metabolism; it is required for DNA replication and normal SOS inducibility. RecF binds preferentially to single-stranded, linear DNA. It also seems to bind ATP. The sequence is that of DNA replication and repair protein RecF from Chlorobium phaeovibrioides (strain DSM 265 / 1930) (Prosthecochloris vibrioformis (strain DSM 265)).